Reading from the N-terminus, the 245-residue chain is Terpene cyclase prhH (245 aa).

7 helical membrane passes run 17–37 (ILAISEVLKVVAAVGWSVNYI), 51–71 (IGILPLCCDIGWEFVYAWMFP), 76–96 (HWQGVVRVWFFLHSAVLLVTL), 113–133 (IVFIYIFVTLVFGAGQYALAA), 138–158 (ALGFHWGGALCQFLSSSCGIA), 170–190 (SYLIWFARAISTFAGFIKLCI), and 205–225 (PMCWFYIVTVLSFDAAYPFLY).

This sequence belongs to the paxB family.

The protein resides in the membrane. It participates in secondary metabolite biosynthesis; terpenoid biosynthesis. Its function is as follows. Terpene cyclase; part of the gene cluster that mediates the biosynthesis of paraherquonin, a meroterpenoid with a unique, highly congested hexacyclic molecular architecture. The first step of the pathway is the synthesis of 3,5-dimethylorsellinic acid (DMOA) by the polyketide synthase prhL. Synthesis of DMOA is followed by farnesylation by the prenyltransferase prhE, methylesterification by the methyl-transferase prhM, epoxidation of the prenyl chain by the flavin-dependent monooxygenase prhF, and cyclization of the farnesyl moiety by the terpene cyclase prhH, to yield the tetracyclic intermediate, protoaustinoid A. The short chain dehydrogenase prhI then oxidizes the C-3 alcohol group of the terpene cyclase product to transform protoaustinoid A into protoaustinoid B. The FAD-binding monooxygenase prhJ catalyzes the oxidation of protoaustinoid B into preaustinoid A which is further oxidized into preaustinoid A1 by FAD-binding monooxygenase phrK. Finally, prhA leads to berkeleydione via the berkeleyone B intermediate. PrhA is a multifunctional dioxygenase that first desaturates at C5-C6 to form berkeleyone B, followed by rearrangement of the A/B-ring to form the cycloheptadiene moiety in berkeleydione. Berkeleydione serves as the key intermediate for the biosynthesis of paraherquonin as well as many other meroterpenoids. The cytochrome P450 monooxygenases prhB, prhD, and prhN, as well as the isomerase prhC, are probably involved in the late stage of paraherquonin biosynthesis, after the production of berkeleydione. Especially prhC might be a multifunctional enzyme that catalyzes the D-ring expansion via intramolecular methoxy rearrangement, as well as the hydrolysis of the expanded D-ring. This is Terpene cyclase prhH from Penicillium brasilianum.